Consider the following 403-residue polypeptide: Large ribosomal subunit protein uL3 (403 aa).

Residues 1-37 (MSHRKFSAPRHGSLGFLPRKRSSRHRGKVKSFPKDDP) are disordered. Phosphoserine is present on Ser-13. Residues 18–31 (PRKRSSRHRGKVKS) are compositionally biased toward basic residues. Lys-39 is covalently cross-linked (Glycyl lysine isopeptide (Lys-Gly) (interchain with G-Cter in SUMO2)). The residue at position 136 (Lys-136) is an N6-acetyllysine. Residues Lys-224 and Lys-226 each participate in a glycyl lysine isopeptide (Lys-Gly) (interchain with G-Cter in SUMO2) cross-link. His-245 bears the Tele-methylhistidine mark. N6-acetyllysine; alternate occurs at positions 286 and 294. Lys-286 participates in a covalent cross-link: Glycyl lysine isopeptide (Lys-Gly) (interchain with G-Cter in SUMO2); alternate. Lys-294 participates in a covalent cross-link: Glycyl lysine isopeptide (Lys-Gly) (interchain with G-Cter in SUMO1); alternate. Ser-304 is subject to Phosphoserine. At Lys-366 the chain carries N6-acetyllysine; alternate. Lys-366 participates in a covalent cross-link: Glycyl lysine isopeptide (Lys-Gly) (interchain with G-Cter in SUMO2); alternate. Lys-373 bears the N6-acetyllysine mark. Residues Lys-386, Lys-393, and Lys-399 each participate in a glycyl lysine isopeptide (Lys-Gly) (interchain with G-Cter in SUMO2) cross-link.

Belongs to the universal ribosomal protein uL3 family. In terms of assembly, component of the large ribosomal subunit. Interacts with DHX33. In terms of processing, constitutively monomethylated at His-245 by METTL18. Methylation at His-245 regulates translation elongation by slowing ribosome traversal on tyrosine codons: slower elongation provides enough time for proper folding of synthesized proteins and prevents cellular aggregation of tyrosine-rich proteins. It is not required for incorporation of RPL3 into ribosomes.

The protein localises to the nucleus. The protein resides in the nucleolus. It is found in the cytoplasm. Functionally, component of the large ribosomal subunit. The ribosome is a large ribonucleoprotein complex responsible for the synthesis of proteins in the cell. This chain is Large ribosomal subunit protein uL3 (Rpl3), found in Rattus norvegicus (Rat).